A 412-amino-acid polypeptide reads, in one-letter code: Putative competence-damage inducible protein (412 aa).

This sequence belongs to the CinA family.

The sequence is that of Putative competence-damage inducible protein from Clostridium perfringens (strain ATCC 13124 / DSM 756 / JCM 1290 / NCIMB 6125 / NCTC 8237 / Type A).